Reading from the N-terminus, the 243-residue chain is Ubiquinone/menaquinone biosynthesis C-methyltransferase UbiE (243 aa).

Residues threonine 69, aspartate 90, and 116–117 (DA) contribute to the S-adenosyl-L-methionine site.

This sequence belongs to the class I-like SAM-binding methyltransferase superfamily. MenG/UbiE family.

The catalysed reaction is a 2-demethylmenaquinol + S-adenosyl-L-methionine = a menaquinol + S-adenosyl-L-homocysteine + H(+). It catalyses the reaction a 2-methoxy-6-(all-trans-polyprenyl)benzene-1,4-diol + S-adenosyl-L-methionine = a 5-methoxy-2-methyl-3-(all-trans-polyprenyl)benzene-1,4-diol + S-adenosyl-L-homocysteine + H(+). The protein operates within quinol/quinone metabolism; menaquinone biosynthesis; menaquinol from 1,4-dihydroxy-2-naphthoate: step 2/2. It functions in the pathway cofactor biosynthesis; ubiquinone biosynthesis. Functionally, methyltransferase required for the conversion of demethylmenaquinol (DMKH2) to menaquinol (MKH2) and the conversion of 2-polyprenyl-6-methoxy-1,4-benzoquinol (DDMQH2) to 2-polyprenyl-3-methyl-6-methoxy-1,4-benzoquinol (DMQH2). This is Ubiquinone/menaquinone biosynthesis C-methyltransferase UbiE from Burkholderia cenocepacia (strain HI2424).